Consider the following 385-residue polypeptide: FK506-binding protein 5 (385 aa).

Residues 26–115 (TNFVSVHYDA…RFEVELIGFW (90 aa)) form the PPIase FKBP-type domain. 3 TPR repeats span residues 128-161 (AEKK…IQDL), 177-210 (VSIQ…DMTK), and 211-244 (IKAY…AIGL).

The enzyme catalyses [protein]-peptidylproline (omega=180) = [protein]-peptidylproline (omega=0). Its activity is regulated as follows. Inhibited by both FK506 and rapamycin. Its function is as follows. PPIases accelerate the folding of proteins. It catalyzes the cis-trans isomerization of proline imidic peptide bonds in oligopeptides. The polypeptide is FK506-binding protein 5 (FKBP5) (Rhizopus delemar (strain RA 99-880 / ATCC MYA-4621 / FGSC 9543 / NRRL 43880) (Mucormycosis agent)).